The primary structure comprises 377 residues: Spermidine/putrescine import ATP-binding protein PotA (377 aa).

An ABC transporter domain is found at 18–248 (IRLSGISKSF…PKNLFVARFI (231 aa)). 50–57 (GPSGCGKT) serves as a coordination point for ATP.

This sequence belongs to the ABC transporter superfamily. Spermidine/putrescine importer (TC 3.A.1.11.1) family. In terms of assembly, the complex is composed of two ATP-binding proteins (PotA), two transmembrane proteins (PotB and PotC) and a solute-binding protein (PotD).

Its subcellular location is the cell inner membrane. It catalyses the reaction ATP + H2O + polyamine-[polyamine-binding protein]Side 1 = ADP + phosphate + polyamineSide 2 + [polyamine-binding protein]Side 1.. In terms of biological role, part of the ABC transporter complex PotABCD involved in spermidine/putrescine import. Responsible for energy coupling to the transport system. The polypeptide is Spermidine/putrescine import ATP-binding protein PotA (Vibrio cholerae serotype O1 (strain ATCC 39315 / El Tor Inaba N16961)).